A 758-amino-acid polypeptide reads, in one-letter code: Aspartyl/asparaginyl beta-hydroxylase (758 aa).

The segment at 1–46 (MAQRKNAKSSGNSSSSGSGSGSTSAGSSSPGARRETKHGGHKNGRK) is disordered. At 1 to 53 (MAQRKNAKSSGNSSSSGSGSGSTSAGSSSPGARRETKHGGHKNGRKGGLSGTS) the chain is on the cytoplasmic side. The segment covering 9 to 31 (SSGNSSSSGSGSGSTSAGSSSPG) has biased composition (low complexity). S14 is subject to Phosphoserine. Residues 54 to 74 (FFTWFMVIALLGVWTSVAVVW) form a helical; Signal-anchor for type II membrane protein membrane-spanning segment. L64 carries an N-linked (GlcNAc...) asparagine glycan. At 75-758 (FDLVDYEEVL…PQQRRSLPAI (684 aa)) the chain is on the lumenal side. The Ca(2+) site is built by D91, D93, D95, D97, and D102. Disordered regions lie at residues 111-140 (ERST…EAEP) and 304-324 (EEQQ…EQKA). Residues 313–324 (TNRKTDDPEQKA) show a composition bias toward basic and acidic residues. A TPR 1 repeat occupies 341-374 (IKAELDAAEKLRKRGKIEEAVNAFKELVRKYPQS). Residue N452 is glycosylated (N-linked (GlcNAc...) asparagine). TPR repeat units follow at residues 454-487 (TSLK…TPND), 489-521 (FAKV…GDPG), and 525-557 (GRFY…GHFA). W625 serves as a coordination point for 2-oxoglutarate. A disulfide bond links C641 and C648. S668 lines the 2-oxoglutarate pocket. H679 contributes to the Fe cation binding site. 688–690 (RMH) lines the 2-oxoglutarate pocket. An N-linked (GlcNAc...) asparagine glycan is attached at N706. Position 725 (H725) interacts with Fe cation. Residue R735 participates in 2-oxoglutarate binding.

It belongs to the aspartyl/asparaginyl beta-hydroxylase family. As to quaternary structure, monomer. Isoform 8 interacts with ORAI1 and STIM1. Isoform 4 interacts with CASQ2. The cofactor is Fe cation. Isoform 1 is detected in all tissues tested. Isoform 8 is mainly expressed in pancreas, heart, brain, kidney and liver. Isoform 8 is expressed in kidney (at protein level).

The protein localises to the endoplasmic reticulum membrane. It localises to the sarcoplasmic reticulum membrane. It catalyses the reaction L-aspartyl-[protein] + 2-oxoglutarate + O2 = 3-hydroxy-L-aspartyl-[protein] + succinate + CO2. Functionally, specifically hydroxylates an Asp or Asn residue in certain epidermal growth factor-like (EGF) domains of a number of proteins. In terms of biological role, membrane-bound Ca(2+)-sensing protein, which is a structural component of the ER-plasma membrane junctions. Isoform 8 regulates the activity of Ca(+2) released-activated Ca(+2) (CRAC) channels in T-cells. This chain is Aspartyl/asparaginyl beta-hydroxylase (ASPH), found in Homo sapiens (Human).